Consider the following 473-residue polypeptide: MSILLFGVSHRSAPVSVLEQLSIDESEQVKIVDRVLQSPLVTEAMVLSTCNRVEVYAVVEAFHGGLSAIGQVLSDHSGMSMGELTKHAYVRYSEAAVEHLFAVASGLDSAVVGEQQVLGQVRRSYSAAEANRTVGRVLHELAQRTLSVGKRVHSETSIDAAGASVVSVALGIAERKLGGLGAKTAVVIGAGSMGALSSAHLTRAGIGKVHVLNRSLARAQRLAGKIRQSGVLAEARTLDRLAEVLTDADAVVSCTGAVAPVVSLADVHHALATARRDETTRPLVICDLGMPRDVDPAVAGLPGVWLIDVERVQREPSAHAASADVAAARHIVAAEVAGYLAGQRMAEVTPTVTALRQRAADVVEAELLRLDNRLPGLDSAERDEVARTVRRVVDKLLHAPTVRIKQLASAPGGDSYAEALRELFQLDQTAVDAVATAGELPVFSSGLDAGSGPQGADGPSAGPTPSAPNPSAE.

Substrate is bound by residues 49 to 52, Ser109, 114 to 116, and Gln120; these read TCNR and EQQ. Residue Cys50 is the Nucleophile of the active site. 189-194 serves as a coordination point for NADP(+); sequence GAGSMG. Residues 445 to 473 are disordered; it reads SGLDAGSGPQGADGPSAGPTPSAPNPSAE.

This sequence belongs to the glutamyl-tRNA reductase family. As to quaternary structure, homodimer.

The enzyme catalyses (S)-4-amino-5-oxopentanoate + tRNA(Glu) + NADP(+) = L-glutamyl-tRNA(Glu) + NADPH + H(+). It functions in the pathway porphyrin-containing compound metabolism; protoporphyrin-IX biosynthesis; 5-aminolevulinate from L-glutamyl-tRNA(Glu): step 1/2. Its function is as follows. Catalyzes the NADPH-dependent reduction of glutamyl-tRNA(Glu) to glutamate 1-semialdehyde (GSA). This Mycobacterium ulcerans (strain Agy99) protein is Glutamyl-tRNA reductase.